The sequence spans 185 residues: Early nodulin-like protein 17 (185 aa).

The signal sequence occupies residues 1 to 21 (MARRDQLVSFLCFFLIVSAVA). The Phytocyanin domain maps to 37-137 (KQYVVGGRSG…GQRLMINVDS (101 aa)). N-linked (GlcNAc...) asparagine glycosylation is found at N79 and N94. An intrachain disulfide couples C93 to C125. Residues 136 to 155 (DSAPSPSPSPSPAPQEAATA) are disordered. Residue S156 is the site of GPI-anchor amidated serine attachment. The propeptide at 157-185 (AATSSSAATAAHALLLAAMAMMGLILGEW) is removed in mature form.

The protein belongs to the early nodulin-like (ENODL) family. As to expression, expressed ubiquitously. Accumulates mainly in anthers, stigmas and ovaries.

The protein resides in the cell membrane. May act as a carbohydrate transporter. Required for male fertility and seed yield. The protein is Early nodulin-like protein 17 of Oryza sativa subsp. japonica (Rice).